Here is a 784-residue protein sequence, read N- to C-terminus: Armadillo repeat-containing X-linked protein 2 (784 aa).

At 1 to 6 (MSRARD) the chain is on the mitochondrial intermembrane side. Mitochondrion outer membrane (MOM)-targeting sequence regions lie at residues 1 to 6 (MSRARD) and 26 to 40 (KYTR…RLTK). Residues 7–27 (AGCVAAGIVIGASAWYCVYKY) traverse the membrane as a helical; Signal-anchor segment. The Cytoplasmic segment spans residues 28–784 (TRGKDQKKKR…VKVIKLVNKF (757 aa)). Disordered stretches follow at residues 328–353 (TSGG…RTAS), 388–461 (HSGA…ELGM), and 488–522 (PESE…TIPM). Residues 396 to 418 (GTSGSSKTAATGKKAAPGAHTGA) are compositionally biased toward low complexity. Over residues 488 to 508 (PESEEGESGWTDTESDSDSEP) the composition is skewed to acidic residues. 3 ARM repeats span residues 528–568 (PYEI…NNAN), 570–609 (SCNQ…NLSE), and 650–689 (ITND…NFAE).

Belongs to the eutherian X-chromosome-specific Armcx family. As to expression, widely expressed in the adult nervous tissue, especially in the forebrain, including the cerebral cortex, hippocampus and thalamus.

The protein localises to the mitochondrion. It is found in the mitochondrion outer membrane. Functionally, may regulate the dynamics and distribution of mitochondria in neural cells. In Mus musculus (Mouse), this protein is Armadillo repeat-containing X-linked protein 2 (Armcx2).